The primary structure comprises 362 residues: Adenosine deaminase (362 aa).

Zn(2+) is bound by residues H19 and H21. Residues H21, D23, and G181 each coordinate substrate. H208 contributes to the Zn(2+) binding site. Residue E211 is the Proton donor of the active site. D300 is a binding site for Zn(2+).

The protein belongs to the metallo-dependent hydrolases superfamily. Adenosine and AMP deaminases family. Adenosine deaminase subfamily. Zn(2+) serves as cofactor.

It carries out the reaction adenosine + H2O + H(+) = inosine + NH4(+). The enzyme catalyses 2'-deoxyadenosine + H2O + H(+) = 2'-deoxyinosine + NH4(+). Its function is as follows. Catalyzes the hydrolytic deamination of adenosine and 2-deoxyadenosine. This Mycobacteroides abscessus (strain ATCC 19977 / DSM 44196 / CCUG 20993 / CIP 104536 / JCM 13569 / NCTC 13031 / TMC 1543 / L948) (Mycobacterium abscessus) protein is Adenosine deaminase.